Reading from the N-terminus, the 519-residue chain is RxLR effector protein PITG_15278 (519 aa).

The first 24 residues, 1-24 (MHFIYRVVLVLAAFALFKVDSISA), serve as a signal peptide directing secretion. A RxLR-dEER motif is present at residues 49-59 (RQLRVMDDNER).

The protein belongs to the RxLR effector family.

The protein localises to the secreted. Its subcellular location is the host cytoplasm. In terms of biological role, effector that enhances P.infestans colonization of Nicotiana benthamiana leaves. The polypeptide is RxLR effector protein PITG_15278 (Phytophthora infestans (strain T30-4) (Potato late blight agent)).